The chain runs to 637 residues: Biosynthetic arginine decarboxylase (637 aa).

K101 is modified (N6-(pyridoxal phosphate)lysine). 286 to 296 (FDVGGGLAVDY) contacts substrate.

The protein belongs to the Orn/Lys/Arg decarboxylase class-II family. SpeA subfamily. Mg(2+) is required as a cofactor. It depends on pyridoxal 5'-phosphate as a cofactor.

It catalyses the reaction L-arginine + H(+) = agmatine + CO2. Its pathway is amine and polyamine biosynthesis; agmatine biosynthesis; agmatine from L-arginine: step 1/1. Functionally, catalyzes the biosynthesis of agmatine from arginine. The protein is Biosynthetic arginine decarboxylase of Shewanella sp. (strain MR-7).